Here is a 761-residue protein sequence, read N- to C-terminus: Xaa-Pro dipeptidyl-peptidase (761 aa).

Catalysis depends on charge relay system residues Ser-349, Asp-469, and His-499.

This sequence belongs to the peptidase S15 family. Homodimer.

Its subcellular location is the cytoplasm. The enzyme catalyses Hydrolyzes Xaa-Pro-|- bonds to release unblocked, N-terminal dipeptides from substrates including Ala-Pro-|-p-nitroanilide and (sequentially) Tyr-Pro-|-Phe-Pro-|-Gly-Pro-|-Ile.. Removes N-terminal dipeptides sequentially from polypeptides having unsubstituted N-termini provided that the penultimate residue is proline. The chain is Xaa-Pro dipeptidyl-peptidase from Streptococcus equi subsp. equi (strain 4047).